The following is a 171-amino-acid chain: Shikimate kinase (171 aa).

ATP is bound at residue 13–18 (GVGKST). Ser17 lines the Mg(2+) pocket. Positions 35, 59, and 81 each coordinate substrate. ATP is bound at residue Arg118. Arg136 serves as a coordination point for substrate. Arg153 lines the ATP pocket.

The protein belongs to the shikimate kinase family. As to quaternary structure, monomer. Requires Mg(2+) as cofactor.

It is found in the cytoplasm. The enzyme catalyses shikimate + ATP = 3-phosphoshikimate + ADP + H(+). It participates in metabolic intermediate biosynthesis; chorismate biosynthesis; chorismate from D-erythrose 4-phosphate and phosphoenolpyruvate: step 5/7. Catalyzes the specific phosphorylation of the 3-hydroxyl group of shikimic acid using ATP as a cosubstrate. The sequence is that of Shikimate kinase from Streptomyces avermitilis (strain ATCC 31267 / DSM 46492 / JCM 5070 / NBRC 14893 / NCIMB 12804 / NRRL 8165 / MA-4680).